Reading from the N-terminus, the 520-residue chain is Glucose-6-phosphate isomerase (520 aa).

Catalysis depends on Glu327, which acts as the Proton donor. Residues His358 and Lys486 contribute to the active site.

This sequence belongs to the GPI family.

Its subcellular location is the cytoplasm. The enzyme catalyses alpha-D-glucose 6-phosphate = beta-D-fructose 6-phosphate. The protein operates within carbohydrate biosynthesis; gluconeogenesis. It functions in the pathway carbohydrate degradation; glycolysis; D-glyceraldehyde 3-phosphate and glycerone phosphate from D-glucose: step 2/4. Catalyzes the reversible isomerization of glucose-6-phosphate to fructose-6-phosphate. The sequence is that of Glucose-6-phosphate isomerase from Bordetella avium (strain 197N).